The following is a 117-amino-acid chain: Large ribosomal subunit protein bL20 (117 aa).

It belongs to the bacterial ribosomal protein bL20 family.

Its function is as follows. Binds directly to 23S ribosomal RNA and is necessary for the in vitro assembly process of the 50S ribosomal subunit. It is not involved in the protein synthesizing functions of that subunit. This chain is Large ribosomal subunit protein bL20, found in Leptospira biflexa serovar Patoc (strain Patoc 1 / Ames).